We begin with the raw amino-acid sequence, 583 residues long: Sensor protein SrrB (583 aa).

Topologically, residues Met1 to Lys11 are cytoplasmic. The helical transmembrane segment at Leu12 to Ile32 threads the bilayer. The Extracellular portion of the chain corresponds to Thr33–Thr174. A helical transmembrane segment spans residues Ile175–Leu195. The Cytoplasmic segment spans residues Ser196–Glu583. In terms of domain architecture, HAMP spans Ser197 to Asp249. A Histidine kinase domain is found at Asn366–Glu583. At His369 the chain carries Phosphohistidine; by autocatalysis.

Its subcellular location is the cell membrane. The enzyme catalyses ATP + protein L-histidine = ADP + protein N-phospho-L-histidine.. Functionally, member of the two-component regulatory system SrrA/SrrB, which is involved in the global regulation of staphylococcal virulence factors in response to environmental oxygen levels as well as biofilm formation. Also plays an essential role in host-derived nitric oxide resistance by regulating hmp/flavohemoglobin, an enzyme that detoxifies nitric oxide by converting it to nitrate. Functions as a sensor protein kinase which is autophosphorylated at a histidine residue and transfers its phosphate group to SrrA. In turn, SrrA binds to the upstream promoter regions of the target genes to positively and negatively regulate their expression. The chain is Sensor protein SrrB (srrB) from Staphylococcus aureus (strain MW2).